A 122-amino-acid chain; its full sequence is Holo-[acyl-carrier-protein] synthase (122 aa).

2 residues coordinate Mg(2+): aspartate 9 and glutamate 58.

The protein belongs to the P-Pant transferase superfamily. AcpS family. The cofactor is Mg(2+).

It localises to the cytoplasm. The enzyme catalyses apo-[ACP] + CoA = holo-[ACP] + adenosine 3',5'-bisphosphate + H(+). Its function is as follows. Transfers the 4'-phosphopantetheine moiety from coenzyme A to a Ser of acyl-carrier-protein. This Chlamydia caviae (strain ATCC VR-813 / DSM 19441 / 03DC25 / GPIC) (Chlamydophila caviae) protein is Holo-[acyl-carrier-protein] synthase.